Here is a 657-residue protein sequence, read N- to C-terminus: Methylenetetrahydrofolate reductase 1 (657 aa).

Residue E18 is the Proton donor/acceptor of the active site. NAD(+)-binding positions include 18 to 23 (EFFPPK) and 49 to 50 (TW). FAD-binding positions include 49–50 (TW), H78, and 108–110 (RGD). D110 contacts substrate. Residue S120 is modified to Phosphoserine. Residues 129-130 (YA), Y152, D171, and K178 each bind FAD. Substrate-binding residues include Q189 and Y286. A Phosphoserine modification is found at S301. The tract at residues 308–329 (VNESSEEEGEDETSGEIGSIEN) is disordered. The segment covering 311–321 (SSEEEGEDETS) has biased composition (acidic residues). S358 is subject to Phosphoserine.

This sequence belongs to the methylenetetrahydrofolate reductase family. The cofactor is FAD.

The catalysed reaction is (6S)-5-methyl-5,6,7,8-tetrahydrofolate + NADP(+) = (6R)-5,10-methylene-5,6,7,8-tetrahydrofolate + NADPH + H(+). The enzyme catalyses (6S)-5-methyl-5,6,7,8-tetrahydrofolate + NAD(+) = (6R)-5,10-methylene-5,6,7,8-tetrahydrofolate + NADH + H(+). The protein operates within one-carbon metabolism; tetrahydrofolate interconversion. This is Methylenetetrahydrofolate reductase 1 (MET12) from Saccharomyces cerevisiae (strain ATCC 204508 / S288c) (Baker's yeast).